Here is a 280-residue protein sequence, read N- to C-terminus: uncharacterized protein (280 aa).

Disordered stretches follow at residues 1–83 (MELK…EEEQ) and 248–280 (IRHR…EARL). The segment covering 12 to 25 (SAKTDNHTVYQNSP) has biased composition (polar residues). Basic and acidic residues-rich tracts occupy residues 41–71 (KQTR…RVDD) and 249–280 (RHRE…EARL).

It belongs to the chlamydial CPn_0705/CT_671/TC_0042 family.

This is an uncharacterized protein from Chlamydia pneumoniae (Chlamydophila pneumoniae).